Reading from the N-terminus, the 377-residue chain is PqqA peptide cyclase (377 aa).

The 217-residue stretch at 12-228 (FGIPLAVLLE…EAARERLKGQ (217 aa)) folds into the Radical SAM core domain. Positions 26, 30, and 33 each coordinate [4Fe-4S] cluster.

This sequence belongs to the radical SAM superfamily. PqqE family. As to quaternary structure, interacts with PqqD. The interaction is necessary for activity of PqqE. It depends on [4Fe-4S] cluster as a cofactor.

It carries out the reaction [PQQ precursor protein] + S-adenosyl-L-methionine = E-Y cross-linked-[PQQ precursor protein] + 5'-deoxyadenosine + L-methionine + H(+). It functions in the pathway cofactor biosynthesis; pyrroloquinoline quinone biosynthesis. Functionally, catalyzes the cross-linking of a glutamate residue and a tyrosine residue in the PqqA protein as part of the biosynthesis of pyrroloquinoline quinone (PQQ). The sequence is that of PqqA peptide cyclase from Rhodopseudomonas palustris (strain ATCC BAA-98 / CGA009).